The chain runs to 200 residues: Peptidyl-tRNA hydrolase (200 aa).

Y16 serves as a coordination point for tRNA. H21 (proton acceptor) is an active-site residue. The tRNA site is built by F67, N69, and N115.

The protein belongs to the PTH family. Monomer.

It localises to the cytoplasm. It carries out the reaction an N-acyl-L-alpha-aminoacyl-tRNA + H2O = an N-acyl-L-amino acid + a tRNA + H(+). Functionally, hydrolyzes ribosome-free peptidyl-tRNAs (with 1 or more amino acids incorporated), which drop off the ribosome during protein synthesis, or as a result of ribosome stalling. Its function is as follows. Catalyzes the release of premature peptidyl moieties from peptidyl-tRNA molecules trapped in stalled 50S ribosomal subunits, and thus maintains levels of free tRNAs and 50S ribosomes. This Prochlorococcus marinus (strain MIT 9312) protein is Peptidyl-tRNA hydrolase.